Consider the following 193-residue polypeptide: Thymidine kinase (193 aa).

ATP is bound by residues serine 9–serine 16 and aspartate 87–glutamine 90. Residue glutamate 88 is the Proton acceptor of the active site. Positions 145, 147, 182, and 185 each coordinate Zn(2+).

This sequence belongs to the thymidine kinase family. In terms of assembly, homotetramer.

It localises to the cytoplasm. It carries out the reaction thymidine + ATP = dTMP + ADP + H(+). The chain is Thymidine kinase from Idiomarina loihiensis (strain ATCC BAA-735 / DSM 15497 / L2-TR).